Reading from the N-terminus, the 42-residue chain is Photosystem II reaction center protein J (42 aa).

The helical transmembrane segment at 10 to 30 (IPLWLVGTVAGTAALTLVAVF) threads the bilayer.

This sequence belongs to the PsbJ family. As to quaternary structure, PSII is composed of 1 copy each of membrane proteins PsbA, PsbB, PsbC, PsbD, PsbE, PsbF, PsbH, PsbI, PsbJ, PsbK, PsbL, PsbM, PsbT, PsbX, PsbY, PsbZ, Psb30/Ycf12, at least 3 peripheral proteins of the oxygen-evolving complex and a large number of cofactors. It forms dimeric complexes.

Its subcellular location is the plastid. The protein localises to the chloroplast thylakoid membrane. Functionally, one of the components of the core complex of photosystem II (PSII). PSII is a light-driven water:plastoquinone oxidoreductase that uses light energy to abstract electrons from H(2)O, generating O(2) and a proton gradient subsequently used for ATP formation. It consists of a core antenna complex that captures photons, and an electron transfer chain that converts photonic excitation into a charge separation. This chain is Photosystem II reaction center protein J, found in Chlorella vulgaris (Green alga).